Consider the following 387-residue polypeptide: Protein arginine N-methyltransferase 1 (387 aa).

Residues 1–60 form a disordered region; the sequence is MDQRKGSGSDANGGLAEATASRLRFEDPDEVMEENPAAAAATVGAEEEGGEGGGGEEVIG. Low complexity predominate over residues 34-44; it reads ENPAAAAATVG. In terms of domain architecture, SAM-dependent MTase PRMT-type spans 66-387; that stretch reads ADYYFDSYSH…VSRTQHYKMR (322 aa). His-79, Arg-88, Gly-112, Glu-134, and Glu-163 together coordinate S-adenosyl-L-methionine. Residues Glu-178 and Glu-187 contribute to the active site.

It belongs to the class I-like SAM-binding methyltransferase superfamily. Protein arginine N-methyltransferase family.

The protein resides in the nucleus. The catalysed reaction is L-arginyl-[protein] + S-adenosyl-L-methionine = N(omega)-methyl-L-arginyl-[protein] + S-adenosyl-L-homocysteine + H(+). It carries out the reaction L-arginyl-[protein] + 2 S-adenosyl-L-methionine = N(omega),N(omega)-dimethyl-L-arginyl-[protein] + 2 S-adenosyl-L-homocysteine + 2 H(+). In terms of biological role, arginine methyltransferase that methylates (mono and asymmetric dimethylation) the guanidino nitrogens of arginyl residues present in target proteins. The polypeptide is Protein arginine N-methyltransferase 1 (PRMT1) (Oryza sativa subsp. indica (Rice)).